We begin with the raw amino-acid sequence, 342 residues long: Terpene cyclase resF (342 aa).

Helical transmembrane passes span valine 5–alanine 25, phenylalanine 81–phenylalanine 101, tryptophan 115–phenylalanine 135, serine 151–phenylalanine 171, and isoleucine 182–leucine 202. Asparagine 224 carries an N-linked (GlcNAc...) asparagine glycan. The next 3 helical transmembrane spans lie at tyrosine 229–glycine 249, phenylalanine 269–leucine 289, and tyrosine 305–leucine 325.

This sequence belongs to the membrane-bound ascI terpene cyclase family.

The protein localises to the membrane. The protein operates within antifungal biosynthesis. In terms of biological role, cyclase; part of the gene cluster that mediates the biosynthesis of the tetrahydropyranyl antifungal agent restricticin that acts as an inhibitor of CYP51 and blocks the ergosterol biosynthesis. The highly reducing polyketide synthase resH, the short chain dehydrogenase resG, the cyclase resF, the FAD-dependent monooxygenase resA and the enoylreductase resD are required to generate the first stable intermediate desmethylrestrictinol. ResH with resD biosynthesize the first polyketide chain intermediate that is reduced by resG, followed by epoxidation by resA before 6-endo cyclization via epoxide opening by resF leads to desmethylrestrictinol. The methyltransferase resE then catalyzes the C4 O-methylation of desmethylrestrictinol to produce restrictinol, and the nonribosomal peptide synthetase resC catalyzes the C3 esterification of restrictinol with glycine that leads to restricticin. This is Terpene cyclase resF from Aspergillus sclerotiorum.